A 770-amino-acid polypeptide reads, in one-letter code: Metabotropic glutamate receptor-like protein F (770 aa).

Positions 1 to 22 (MKIKNFIYFLIYFIFLFKVING) are cleaved as a signal peptide. Over 23–370 (QNKTCKISVL…STVDYPESLK (348 aa)) the chain is Extracellular. Asn24, Asn185, Asn260, Asn286, Asn319, and Asn344 each carry an N-linked (GlcNAc...) asparagine glycan. The helical transmembrane segment at 371–391 (IGVTVVSGFCIFLCLISMIIV) threads the bilayer. Residues 392-405 (IKFKEAKVIKSSSP) lie on the Cytoplasmic side of the membrane. The helical transmembrane segment at 406-426 (IFCLLILFGCIVIFVGCIMFA) threads the bilayer. The Extracellular portion of the chain corresponds to 427-442 (RSPTDGSCRSRVWLLS). Residues 443 to 463 (LGYTIFLGNLMVKNWRIWLLF) traverse the membrane as a helical segment. Residues 464 to 483 (DNPKLKKRAITNWKLYPWVS) are Cytoplasmic-facing. The helical transmembrane segment at 484-504 (GIVIIDIVILSIWQALGDIVA) threads the bilayer. At 505–528 (ESRTGIDSLTKYEYRNVCASSDQG) the chain is on the extracellular side. The helical transmembrane segment at 529-549 (SIALYLLLVFHGLILLVACFI) threads the bilayer. At 550–565 (SFKIKVVDIEEFNESK) the chain is on the cytoplasmic side. A helical membrane pass occupies residues 566 to 586 (PITTSVYIITFCLFIVIPIMV). Residues 587 to 594 (SSPTVTTQ) lie on the Extracellular side of the membrane. The helical transmembrane segment at 595–615 (TTIICICALITTMLSIILLFG) threads the bilayer. Over 616 to 770 (TKFFKMITVG…GQTEIDSNDV (155 aa)) the chain is Cytoplasmic. The interval 639–740 (SSHSQRTKSS…EEKQKDEEEI (102 aa)) is disordered. 2 stretches are compositionally biased toward basic and acidic residues: residues 676–693 (SSEK…KDHM) and 730–740 (NEEKQKDEEEI). Positions 715–760 (REQINDNIILENNNDNEEKQKDEEEIKEEKLLVSEIQAKRLSLEQN) form a coiled coil.

This sequence in the N-terminal section; belongs to the BMP lipoprotein family. It in the C-terminal section; belongs to the G-protein coupled receptor 3 family. GABA-B receptor subfamily.

It localises to the membrane. This is Metabotropic glutamate receptor-like protein F (grlF) from Dictyostelium discoideum (Social amoeba).